Here is a 137-residue protein sequence, read N- to C-terminus: Putative pre-16S rRNA nuclease (137 aa).

Belongs to the YqgF nuclease family.

It localises to the cytoplasm. Its function is as follows. Could be a nuclease involved in processing of the 5'-end of pre-16S rRNA. This is Putative pre-16S rRNA nuclease from Bacillus cytotoxicus (strain DSM 22905 / CIP 110041 / 391-98 / NVH 391-98).